Here is a 494-residue protein sequence, read N- to C-terminus: MAAEAPSGGEAPVCDSGRSDAICNFVICNDSPLRGQPIIFNPDFFVEKLRHEKPEVFTELVVSNITRLIDLPGTELAQLMGEVDLKLPGGAGPAAGFFRSLMSLKRKEKGVVFGSPLTEEGIAQIYQLIEYLHKNLRVEGLFRVPGNSVRQQLLRDALNNGTDIDLDSGEFHSNDVATLLKMFLGELPEPLLTHKHFHVHLKIADLMQFDDKGNKTNIPDKERQIEALQLLFLILPPANRNLLKLLLDLLYQTAKKQDKNKMSAHNLALMFAPHVLWPKNVTANDLQENIIKLNTGMAFMIKHSQKLFKAPAYIRECARLYYLGSRTQMSKDDLDLTTSCHNMSFQLARCQRQNRVDPSSQQEETQQHTEEALRELFQHVHNWPDSAKKKQLLRQFHKQSLTQTPGREPSTPRVQKRARSRSFSGLIKRKVLGSQMTSEKKNSSPAPESVAMGELKKASKENMNLFFSGSPAGTVTPTRLKWSEAKREGRKGFF.

Ala2 is subject to N-acetylalanine. Residues Ser7 and Ser31 each carry the phosphoserine modification. Positions 102-308 (MSLKRKEKGV…FMIKHSQKLF (207 aa)) constitute a Rho-GAP domain. The segment at 399–451 (QSLTQTPGREPSTPRVQKRARSRSFSGLIKRKVLGSQMTSEKKNSSPAPESVA) is disordered. 3 positions are modified to phosphoserine: Ser422, Ser438, and Ser470. Thr478 bears the Phosphothreonine mark.

Functionally, GTPase activator for the Rho-type GTPases by converting them to an inactive GDP-bound state. This chain is Rho GTPase-activating protein 19 (Arhgap19), found in Mus musculus (Mouse).